Reading from the N-terminus, the 196-residue chain is Gastrula zinc finger protein xLCGF3.1 (196 aa).

7 C2H2-type zinc fingers span residues 6–28 (FMCT…HMTH), 34–56 (FTCT…QTIH), 62–84 (FTCI…YMTH), 90–112 (FTCT…QTMH), 118–140 (LTCT…QRVH), 146–168 (FTCT…QTVH), and 174–196 (FTCT…QIVH).

Belongs to the krueppel C2H2-type zinc-finger protein family.

Its subcellular location is the nucleus. Its function is as follows. May be involved in transcriptional regulation. The sequence is that of Gastrula zinc finger protein xLCGF3.1 from Xenopus laevis (African clawed frog).